The primary structure comprises 344 residues: MSNAITMGIFWHLIGAASAACFYAPFKKVKKWSWETMWSVGGIVSWIILPWAISALLLPNFWAYYSSFSLSTLLPVFLFGAMWGIGNINYGLTMRYLGMSMGIGIAIGITLIVGTLMTPIINGNFDVLISTEGGRMTLLGVLVALIGVGIVTRAGQLKERKMGIKAEEFNLKKGLVLAVMCGIFSAGMSFAMNAAKPMYEAAAALGVDPLYVALPSYVVIMGGGAIINLGFCFIRLAKVKDLSLKVDFSLEKPLIIHNVLLSALGGLMWYLQFFFYAWGHARIPAQYDYISWMLHMSFYVLCGGIVGLVLKEWNNAGRRPVTVLSLGCVVIIVAANIVGIGMAN.

10 helical membrane passes run 4–24, 38–58, 68–88, 101–121, 137–157, 175–195, 214–234, 259–279, 290–310, and 323–343; these read AITM…CFYA, WSVG…ALLL, FSLS…IGNI, MGIG…TPII, TLLG…AGQL, LVLA…MNAA, LPSY…FCFI, VLLS…YAWG, ISWM…GLVL, and VLSL…IGMA.

The protein belongs to the L-rhamnose transporter (TC 2.A.7.6) family.

Its subcellular location is the cell inner membrane. The enzyme catalyses L-rhamnopyranose(in) + H(+)(in) = L-rhamnopyranose(out) + H(+)(out). Functionally, uptake of L-rhamnose across the cytoplasmic membrane with the concomitant transport of protons into the cell (symport system). The polypeptide is L-rhamnose-proton symporter (Shigella dysenteriae serotype 1 (strain Sd197)).